Reading from the N-terminus, the 66-residue chain is uncharacterized protein (66 aa).

2 helical membrane-spanning segments follow: residues 5–25 and 30–50; these read ALIV…PLVN and IMFG…VTPL.

Its subcellular location is the cell membrane. This is an uncharacterized protein from Bacillus subtilis (strain 168).